The chain runs to 274 residues: Penicillin-insensitive murein endopeptidase (274 aa).

An N-terminal signal peptide occupies residues 1–19 (MNKTAIALLALLASSASLA). 3 disulfides stabilise this stretch: Cys-44/Cys-265, Cys-187/Cys-235, and Cys-216/Cys-223. Zn(2+) contacts are provided by His-110, His-113, Asp-120, Asp-147, His-150, and His-211. The segment at 227–274 (PLPPPGDGCGAELQSWFEPPKPGTTKPEKKTPPPLPPSCQALLDEHVI) is disordered.

It belongs to the peptidase M74 family. Dimer. Requires Zn(2+) as cofactor.

The protein resides in the periplasm. Functionally, murein endopeptidase that cleaves the D-alanyl-meso-2,6-diamino-pimelyl amide bond that connects peptidoglycan strands. Likely plays a role in the removal of murein from the sacculus. This chain is Penicillin-insensitive murein endopeptidase, found in Escherichia coli (strain ATCC 8739 / DSM 1576 / NBRC 3972 / NCIMB 8545 / WDCM 00012 / Crooks).